The sequence spans 327 residues: Cyclic AMP-responsive element-binding protein 1 (327 aa).

2 disordered regions span residues 1–29 (MTMD…TVQA) and 94–113 (SEDS…RREI). The KID domain occupies 8–146 (DNQQSGDAAV…IEEEKSEEET (139 aa)). Residues 20 to 29 (AESQQMTVQA) show a composition bias toward polar residues. Ser-119 is modified (phosphoserine; by CaMK1, CaMK2, CaMK4, PKB/AKT1 or PKB/AKT2, RPS6KA3, RPS6KA4, RPS6KA5 and SGK1). Lys-122 participates in a covalent cross-link: Glycyl lysine isopeptide (Lys-Gly) (interchain with G-Cter in SUMO2). Residues 126–149 (DLSSDAPGVPRIEEEKSEEETSAP) form a disordered region. At Ser-128 the chain carries Phosphoserine; by CaMK2. Residue Ser-257 is modified to Phosphoserine; by HIPK2. One can recognise a bZIP domain in the interval 269–327 (ARKREVRLMKNREAARECRRKKKEYVKCLENRVAVLENQNKTLIEELKALKDLYCHKSD). The interval 270-295 (RKREVRLMKNREAARECRRKKKEYVK) is basic motif. Residues Lys-271 and Lys-290 each participate in a glycyl lysine isopeptide (Lys-Gly) (interchain with G-Cter in SUMO1) cross-link. The interval 297–318 (LENRVAVLENQNKTLIEELKAL) is leucine-zipper.

Belongs to the bZIP family. In terms of assembly, interacts with PPRC1. Binds DNA as a dimer. This dimer is stabilized by magnesium ions. Interacts, through the bZIP domain, with the coactivators CRTC1/TORC1, CRTC2/TORC2 and CRTC3/TORC3. When phosphorylated on Ser-119, binds CREBBP. Interacts with CREBL2; regulates CREB1 phosphorylation, stability and transcriptional activity. Interacts (phosphorylated form) with TOX3. Interacts with ARRB1. Binds to HIPK2. Interacts with SGK1. Interacts with TSSK4; this interaction facilitates phosphorylation on Ser-119. Forms a complex with KMT2A and CREBBP. Interacts with TOX4; CREB1 is required for full induction of TOX4-dependent activity and the interaction is increased by cAMP and inhibited by insulin. In terms of processing, phosphorylation of Ser-119 allows CREBBP binding. Stimulated by phosphorylation. Phosphorylation of both Ser-128 and Ser-119 in the SCN regulates the activity of CREB and participate in circadian rhythm generation. Phosphorylated upon calcium influx by CaMK4 and CaMK2 on Ser-119. CaMK4 is much more potent than CaMK2 in activating CREB. Phosphorylated by CaMK2 on Ser-128. Phosphorylation of Ser-128 blocks CREB-mediated transcription even when Ser-119 is phosphorylated. Phosphorylated by CaMK1. Phosphorylation of Ser-257 by HIPK2 in response to genotoxic stress promotes CREB1 activity, facilitating the recruitment of the coactivator CBP. Phosphorylated at Ser-119 by RPS6KA3, RPS6KA4 and RPS6KA5 in response to mitogenic or stress stimuli. CREBL2 positively regulates phosphorylation at Ser-119 thereby stimulating CREB1 transcriptional activity. In liver, phosphorylation is induced by fasting or glucagon in a circadian fashion. Phosphorylated by TSSK4 on Ser-119. Sumoylated with SUMO1. Sumoylation on Lys-290, but not on Lys-271, is required for nuclear localization of this protein. Sumoylation is enhanced under hypoxia, promoting nuclear localization and stabilization.

The protein localises to the nucleus. Functionally, phosphorylation-dependent transcription factor that stimulates transcription upon binding to the DNA cAMP response element (CRE), a sequence present in many viral and cellular promoters. Transcription activation is enhanced by the TORC coactivators which act independently of Ser-119 phosphorylation. Involved in different cellular processes including the synchronization of circadian rhythmicity and the differentiation of adipose cells. Regulates the expression of apoptotic and inflammatory response factors in cardiomyocytes in response to ERFE-mediated activation of AKT signaling. The protein is Cyclic AMP-responsive element-binding protein 1 (Creb1) of Rattus norvegicus (Rat).